Here is a 347-residue protein sequence, read N- to C-terminus: F-box protein At2g14500 (347 aa).

Positions 6-52 (PLTLSELPHDLLRNIFNRLSFADFHRATWNSISKQTAPPKTKSPWLI) constitute an F-box domain.

This chain is F-box protein At2g14500, found in Arabidopsis thaliana (Mouse-ear cress).